The following is a 318-amino-acid chain: Aspartate carbamoyltransferase catalytic subunit (318 aa).

Residues Arg-56 and Thr-57 each contribute to the carbamoyl phosphate site. Lys-84 is a binding site for L-aspartate. The carbamoyl phosphate site is built by Arg-106, His-143, and Gln-146. Residues Arg-176 and Arg-230 each contribute to the L-aspartate site. Carbamoyl phosphate-binding residues include Gly-271 and Pro-272.

This sequence belongs to the aspartate/ornithine carbamoyltransferase superfamily. ATCase family. As to quaternary structure, heterododecamer (2C3:3R2) of six catalytic PyrB chains organized as two trimers (C3), and six regulatory PyrI chains organized as three dimers (R2).

It carries out the reaction carbamoyl phosphate + L-aspartate = N-carbamoyl-L-aspartate + phosphate + H(+). It functions in the pathway pyrimidine metabolism; UMP biosynthesis via de novo pathway; (S)-dihydroorotate from bicarbonate: step 2/3. Functionally, catalyzes the condensation of carbamoyl phosphate and aspartate to form carbamoyl aspartate and inorganic phosphate, the committed step in the de novo pyrimidine nucleotide biosynthesis pathway. The protein is Aspartate carbamoyltransferase catalytic subunit of Mycobacterium avium (strain 104).